The primary structure comprises 504 residues: Maturase K (504 aa).

It belongs to the intron maturase 2 family. MatK subfamily.

The protein localises to the plastid. It is found in the chloroplast. Its function is as follows. Usually encoded in the trnK tRNA gene intron. Probably assists in splicing its own and other chloroplast group II introns. The protein is Maturase K of Matthiola incana (Common stock).